An 818-amino-acid polypeptide reads, in one-letter code: MERYKALEQLLTELDDFLKILDQENLSSTALVKKSCLAELLRLYTKSSSSDEEYIYMNKVTINKQQNAESQGKAPEEQGLLPNGEPSQHSSAPQKSLPDLPPPKMIPERKQLAIPKTESPEGYYEEAEPYDTSLNEDGEAVSSSYESYDEEDGSKGKSAPYQWPSPEAGIELMRDARICAFLWRKKWLGQWAKQLCVIKDNRLLCYKSSKDHSPQLDVNLLGSSVIHKEKQVRKKEHKLKITPMNADVIVLGLQSKDQAEQWLRVIQEVSGLPSEGASEGNQYTPDAQRFNCQKPDIAEKYLSASEYGSSVDGHPEVPETKDVKKKCSAGLKLSNLMNLGRKKSTSLEPVERSLETSSYLNVLVNSQWKSRWCSVRDNHLHFYQDRNRSKVAQQPLSLVGCEVVPDPSPDHLYSFRILHKGEELAKLEAKSSEEMGHWLGLLLSESGSKTDPEEFTYDYVDADRVSCIVSAAKNSLLLMQRKFSEPNTYIDGLPSQDRQEELYDDVDLSELTAAVEPTEEATPVADDPNERESDRVYLDLTPVKSFLHGPSSAQAQASSPTLSCLDNATEALPADSGPGPTPDEPCIKCPENLGEQQLESLEPEDPSLRITTVKIQTEQQRISFPPSCPDAVVATPPGASPPVKDRLRVTSAEIKLGKNRTEAEVKRYTEEKERLEKKKEEIRGHLAQLRKEKRELKETLLKCTDKEVLASLEQKLKEIDEECRGEESRRVDLELSIMEVKDNLKKAEAGPVTLGTTVDTTHLENVSPRPKAVTPASAPDCTPVNSATTLKNRPLSVVVTGKGTVLQKAKEWEKKGAS.

A Phosphotyrosine modification is found at Y56. Residues Q66–W163 form a disordered region. Over residues E85–Q94 the composition is skewed to polar residues. Positions Y123–E139 are enriched in acidic residues. PH domains follow at residues D175–G271 and S353–G447. A Phosphoserine modification is found at S408. Position 413 is a phosphotyrosine (Y413). S484 carries the post-translational modification Phosphoserine. A disordered region spans residues A513–E532. A coiled-coil region spans residues A652–A749. The segment at N765–A787 is disordered.

Interacts with SRC. Interacts with LCK when tyrosine phosphorylated. In terms of processing, tyrosine phosphorylated (by SRC). Detected in spleen and thyroid, and at lower levels in kidney, brain, lung and pancreas.

It localises to the cytoplasm. Functionally, may play a role in a signaling cascade by enhancing the kinase activity of SRC. Contributes to SRC-regulated transcription activation. The chain is Actin filament-associated protein 1-like 2 (AFAP1L2) from Homo sapiens (Human).